A 156-amino-acid polypeptide reads, in one-letter code: Ribosomal RNA large subunit methyltransferase H (156 aa).

S-adenosyl-L-methionine-binding positions include Leu-73, Gly-104, and 123 to 128 (ISSMTL).

The protein belongs to the RNA methyltransferase RlmH family. In terms of assembly, homodimer.

It is found in the cytoplasm. The catalysed reaction is pseudouridine(1915) in 23S rRNA + S-adenosyl-L-methionine = N(3)-methylpseudouridine(1915) in 23S rRNA + S-adenosyl-L-homocysteine + H(+). Specifically methylates the pseudouridine at position 1915 (m3Psi1915) in 23S rRNA. In Burkholderia lata (strain ATCC 17760 / DSM 23089 / LMG 22485 / NCIMB 9086 / R18194 / 383), this protein is Ribosomal RNA large subunit methyltransferase H.